A 1334-amino-acid polypeptide reads, in one-letter code: Aldehyde oxidase 1 (1334 aa).

Positions 5–92 constitute a 2Fe-2S ferredoxin-type domain; that stretch reads PELLFYVNGR…GAAVTTVEGI (88 aa). Residues Cys-44, Cys-49, Cys-52, and Cys-74 each coordinate [2Fe-2S] cluster. Residue Gln-113 participates in Mo-molybdopterin binding. Residues Cys-114, Cys-117, Cys-149, and Cys-151 each coordinate [2Fe-2S] cluster. Residue Cys-151 participates in Mo-molybdopterin binding. Positions 236–421 constitute an FAD-binding PCMH-type domain; that stretch reads FSGERMMWIS…ASVHIPYSRK (186 aa). Residues 264-271, Ala-345, Ser-354, His-358, Asp-367, and Leu-411 each bind FAD; that span reads VVMGNTSV. Mo-molybdopterin is bound by residues 802 to 803 and Met-1043; that span reads AF. Ser-1064 carries the phosphoserine modification. Mo-molybdopterin is bound by residues 1084 to 1087, Gln-1199, and Leu-1264; that span reads GSVV. Glu-1266 acts as the Proton acceptor; for azaheterocycle hydroxylase activity in catalysis.

It belongs to the xanthine dehydrogenase family. Homodimer. Requires [2Fe-2S] cluster as cofactor. FAD serves as cofactor. Mo-molybdopterin is required as a cofactor. The N-terminus is blocked. In terms of tissue distribution, very high expression in liver and lung. High expression in kidney, pancreas, brain stem and spinal cord. Moderate expression in heart, testis, eye, cerebral cortex and cerebellum. Low expression in stomach and muscle.

It localises to the cytoplasm. It catalyses the reaction an aldehyde + O2 + H2O = a carboxylate + H2O2 + H(+). The enzyme catalyses retinal + O2 + H2O = retinoate + H2O2 + H(+). The catalysed reaction is all-trans-retinal + O2 + H2O = all-trans-retinoate + H2O2 + H(+). Its activity is regulated as follows. Inhibited by hydralazine and menadione. Not inhibited by BOF-4272 or allopurinol, xanthine dehydrogenase potent inhibitors. In contrast to guinea pig, human and rat, isovanillin is not an inhibitor but a substrate for AOX1 in rabbit. In terms of biological role, oxidase with broad substrate specificity, oxidizing aromatic azaheterocycles, such as N1-methylnicotinamide, N-methylphthalazinium and phthalazine, as well as aldehydes, such as benzaldehyde, retinal, pyridoxal, and vanillin. Plays a key role in the metabolism of xenobiotics and drugs containing aromatic azaheterocyclic substituents. Participates in the bioactivation of prodrugs such as famciclovir, catalyzing the oxidation step from 6-deoxypenciclovir to penciclovir, which is a potent antiviral agent. Is probably involved in the regulation of reactive oxygen species homeostasis. May be a prominent source of superoxide generation via the one-electron reduction of molecular oxygen. May also catalyze nitric oxide (NO) production via the reduction of nitrite to NO with NADH or aldehyde as electron donor. May play a role in adipogenesis. Cannot use hypoxanthine and all-trans-retinol as substrate. This chain is Aldehyde oxidase 1, found in Oryctolagus cuniculus (Rabbit).